A 551-amino-acid polypeptide reads, in one-letter code: uncharacterized protein (551 aa).

The next 6 helical transmembrane spans lie at 1–21 (MIAY…IVNS), 25–45 (WTYF…LMVS), 99–119 (GALF…FGFN), 124–144 (LGVL…SLMW), 266–286 (FAFL…GVFY), and 490–510 (FLDL…SAED).

Its subcellular location is the cell membrane. This is an uncharacterized protein from Haemophilus influenzae (strain ATCC 51907 / DSM 11121 / KW20 / Rd).